Consider the following 236-residue polypeptide: Ribose-5-phosphate isomerase A 2 (236 aa).

Substrate contacts are provided by residues 31–34 (SGTT), 86–89 (DGPD), and 99–102 (KGGG). The active-site Proton acceptor is the Glu-108. Position 126 (Lys-126) interacts with substrate.

This sequence belongs to the ribose 5-phosphate isomerase family. In terms of assembly, homodimer.

It catalyses the reaction aldehydo-D-ribose 5-phosphate = D-ribulose 5-phosphate. It participates in carbohydrate degradation; pentose phosphate pathway; D-ribose 5-phosphate from D-ribulose 5-phosphate (non-oxidative stage): step 1/1. Functionally, catalyzes the reversible conversion of ribose-5-phosphate to ribulose 5-phosphate. In Yersinia pestis, this protein is Ribose-5-phosphate isomerase A 2.